The primary structure comprises 106 residues: Molt-inhibiting hormone (106 aa).

The signal sequence occupies residues 1-29 (MVNQVAQCFTVRRVWLVVVVGLLVHQTTA). Intrachain disulfides connect cysteine 36-cysteine 73, cysteine 53-cysteine 69, and cysteine 56-cysteine 82. Alanine 104 is subject to Alanine amide. A propeptide spanning residues 105–106 (GR) is cleaved from the precursor.

In terms of tissue distribution, sinus gland of the eyestalk.

It localises to the secreted. In terms of biological role, inhibits Y-organs where molting hormone (ecdysteroid) is secreted. A molting cycle is initiated when MIH secretion diminishes or stops. The protein is Molt-inhibiting hormone of Faxonius limosus (Spinycheek crayfish).